A 419-amino-acid chain; its full sequence is MTTQLEQAWELAKQRFAAVGIDVEEALRQLDRLPVSMHCWQGDDVSGFENPEGSLTGGIQATGNYPGKARNASELRTDLEQAMRLIPGPKRLNLHAIYLESDTPVSRDQIKPEHFKNWVEWAKANQLGLDFNPSCFSHPLSADGFTLSHADDSIRQFWIDHCKASRRVSAYFGEQLGTPSVMNIWIPDGMKDITVDRLAPRQRLLAALDEVISEKLNPAHHIDAVESKLFGIGAESYTVGSNEFYMGYATSRQTALCLDAGHFHPTEVISDKISAAMLYVPQLLLHVSRPVRWDSDHVVLLDDETQAIASEIVRHDLFDRVHIGLDFFDASINRIAAWVIGTRNMKKALLRALLEPTAELRKLEAAGDYTARLALLEEQKSLPWQAVWEMYCQRHDTPTGSEWLESVRAYEKAILSQRG.

Residues histidine 262, aspartate 294, and aspartate 296 each coordinate Mn(2+).

It belongs to the rhamnose isomerase family. As to quaternary structure, homotetramer. It depends on Mn(2+) as a cofactor.

The protein localises to the cytoplasm. It catalyses the reaction L-rhamnopyranose = L-rhamnulose. Its pathway is carbohydrate degradation; L-rhamnose degradation; glycerone phosphate from L-rhamnose: step 1/3. Catalyzes the interconversion of L-rhamnose and L-rhamnulose. This is L-rhamnose isomerase from Escherichia coli (strain 55989 / EAEC).